A 142-amino-acid polypeptide reads, in one-letter code: HTH-type transcriptional regulator MntR (142 aa).

The 63-residue stretch at 1-63 folds into the HTH dtxR-type domain; the sequence is MTTPSMEDYI…YEKYRGLVLT (63 aa). Asp-8, Glu-11, His-77, Glu-99, Glu-102, and His-103 together coordinate Mn(2+).

It belongs to the DtxR/MntR family. As to quaternary structure, homodimer.

It is found in the cytoplasm. Its activity is regulated as follows. DNA binding is strongly activated by Mn(2+). Functionally, central regulator of manganese homeostasis. The sequence is that of HTH-type transcriptional regulator MntR from Bacillus velezensis (strain DSM 23117 / BGSC 10A6 / LMG 26770 / FZB42) (Bacillus amyloliquefaciens subsp. plantarum).